Reading from the N-terminus, the 23-residue chain is Cytochrome c3-1 (23 aa).

Residues 1–23 (AAPKAPADGLKMDKTKQXVVFNH) form a disordered region. A heme-binding site is contributed by H23.

Post-translationally, binds 4 heme groups per subunit.

It is found in the periplasm. Participates in sulfate respiration coupled with phosphorylation by transferring electrons from the enzyme dehydrogenase to ferredoxin. This Nitratidesulfovibrio vulgaris (Desulfovibrio vulgaris) protein is Cytochrome c3-1.